We begin with the raw amino-acid sequence, 1147 residues long: Nitric oxide synthase, inducible (1147 aa).

A disordered region spans residues 22 to 51; that stretch reads KDINNNVEKTPGAIPSPTTQDDPKSHKHQN. Positions 23 to 27 match the DINNN-motif; mediates interaction with SPSB1, SPSB2 and SPSB4 motif; the sequence is DINNN. Residues Cys107 and Cys112 each contribute to the Zn(2+) site. Residue Ser115 participates in (6R)-L-erythro-5,6,7,8-tetrahydrobiopterin binding. Heme b is bound at residue Cys197. Gln260, Trp369, Tyr370, and Glu374 together coordinate L-arginine. Arg378, Ile459, Trp460, and Phe473 together coordinate (6R)-L-erythro-5,6,7,8-tetrahydrobiopterin. Tyr488 contributes to the heme b binding site. The tract at residues 512 to 532 is calmodulin-binding; sequence FTVLVKAVFFASVLMRKVMAS. Residues 536–674 enclose the Flavodoxin-like domain; that stretch reads ATVLFATETG…AFRSWAVQTF (139 aa). FMN contacts are provided by Thr542, Glu543, Thr544, Lys546, and Ser547. A Phosphothreonine modification is found at Thr564. At Tyr572 the chain carries Phosphotyrosine. The FMN site is built by Ser588, Thr589, Ser625, Cys632, Glu658, and Gln662. One can recognise an FAD-binding FR-type domain in the interval 727–967; that stretch reads KNVFTMRLKS…VRSVSGFQLP (241 aa). Arg747 is an NADP(+) binding site. Residues His769, Arg903, Tyr905, Ser906, Thr921, and Ala923 each coordinate FAD. Position 926 (Thr926) interacts with NADP(+). Residues Tyr927, Val940, Cys941, and Ser942 each contribute to the FAD site. NADP(+)-binding residues include Thr981, Arg1014, Ser1043, Arg1044, Lys1050, Tyr1052, Gln1054, and Asp1087.

It belongs to the NOS family. In terms of assembly, homodimer. Interacts with NHERF1. Interacts with GAPDH; induced by oxidatively-modified low-densitity lipoprotein (LDL(ox)). Interacts with S100A8 and S100A9 to form the iNOS-S100A8/9 transnitrosylase complex. Interacts with SPSB1, SPSB2 and SPSB4. Interacts with ELOC and CUL5 in the presence of SPSB1 or SPSB2 or SPSB4. Forms a complex with ASL, ASS1 and HSP90AA1; the complex regulates cell-autonomous L-arginine synthesis and citrulline recycling while channeling extracellular L-arginine to nitric oxide synthesis pathway. It depends on heme b as a cofactor. The cofactor is FAD. FMN is required as a cofactor. (6R)-L-erythro-5,6,7,8-tetrahydrobiopterin serves as cofactor. Post-translationally, polyubiquitinated; mediated by SPSB1, SPSB2 and SPSB4, leading to proteasomal degradation. In terms of tissue distribution, in normal kidney, expressed primarily in the medullary thick ascending limb, with minor amounts in the medullary collecting duct and vasa recta bundle.

The protein resides in the cytoplasm. Its subcellular location is the cytosol. It carries out the reaction 2 L-arginine + 3 NADPH + 4 O2 + H(+) = 2 L-citrulline + 2 nitric oxide + 3 NADP(+) + 4 H2O. With respect to regulation, not stimulated by calcium/calmodulin. Aspirin inhibits expression and function of this enzyme and effects may be exerted at the level of translational/post-translational modification and directly on the catalytic activity. In terms of biological role, produces nitric oxide (NO) which is a messenger molecule with diverse functions throughout the body. In macrophages, NO mediates tumoricidal and bactericidal actions. Also has nitrosylase activity and mediates cysteine S-nitrosylation of cytoplasmic target proteins such PTGS2/COX2. As component of the iNOS-S100A8/9 transnitrosylase complex involved in the selective inflammatory stimulus-dependent S-nitrosylation of GAPDH implicated in regulation of the GAIT complex activity and probably multiple targets including ANXA5, EZR, MSN and VIM. Involved in inflammation, enhances the synthesis of pro-inflammatory mediators such as IL6 and IL8. The polypeptide is Nitric oxide synthase, inducible (Nos2) (Rattus norvegicus (Rat)).